We begin with the raw amino-acid sequence, 230 residues long: MTLVTEVEAQAWLREVLHVDDASMSRLAHLVDLLLAENERQNLVARGTLPHVWVRHIVDSAQLLHVSRETSGSGEWLDLGTGAGFPGLVIAAIQSDRPVTLVDSRRLRTEWLQRAADALELSNVRVILSRVEDLESGAYAAISARAFAPLDKLLAISARFSTPDTLWLLPKGAGAQHELQMLPESWHHMFHVEQSLTDPAAGIIVGRLLAGKQPAPHVSRQQAPRKGKRT.

S-adenosyl-L-methionine is bound by residues Gly80, Phe85, Val131 to Glu132, and Arg145.

The protein belongs to the methyltransferase superfamily. RNA methyltransferase RsmG family.

Its subcellular location is the cytoplasm. It carries out the reaction guanosine(527) in 16S rRNA + S-adenosyl-L-methionine = N(7)-methylguanosine(527) in 16S rRNA + S-adenosyl-L-homocysteine. Its function is as follows. Specifically methylates the N7 position of guanine in position 527 of 16S rRNA. The polypeptide is Ribosomal RNA small subunit methyltransferase G (Novosphingobium aromaticivorans (strain ATCC 700278 / DSM 12444 / CCUG 56034 / CIP 105152 / NBRC 16084 / F199)).